The sequence spans 160 residues: Protein shisa-like-2B (160 aa).

Residues 65–85 traverse the membrane as a helical segment; sequence IGALIGLGIAALVLLAFVISV.

The protein belongs to the shisa family.

The protein resides in the membrane. The sequence is that of Protein shisa-like-2B from Homo sapiens (Human).